The sequence spans 996 residues: Alanine--tRNA ligase, chloroplastic/mitochondrial (996 aa).

The Zn(2+) site is built by His-677, His-681, Cys-779, and His-783.

The protein belongs to the class-II aminoacyl-tRNA synthetase family. As to quaternary structure, monomer. It depends on Zn(2+) as a cofactor.

It localises to the plastid. The protein localises to the chloroplast. Its subcellular location is the mitochondrion. It catalyses the reaction tRNA(Ala) + L-alanine + ATP = L-alanyl-tRNA(Ala) + AMP + diphosphate. In terms of biological role, catalyzes the attachment of alanine to tRNA(Ala) in a two-step reaction: alanine is first activated by ATP to form Ala-AMP and then transferred to the acceptor end of tRNA(Ala). Also edits incorrectly charged tRNA(Ala) via its editing domain. This Oryza sativa subsp. japonica (Rice) protein is Alanine--tRNA ligase, chloroplastic/mitochondrial.